Reading from the N-terminus, the 133-residue chain is Small ribosomal subunit protein uS8 (133 aa).

Belongs to the universal ribosomal protein uS8 family. In terms of assembly, part of the 30S ribosomal subunit. Contacts proteins S5 and S12.

Functionally, one of the primary rRNA binding proteins, it binds directly to 16S rRNA central domain where it helps coordinate assembly of the platform of the 30S subunit. This Trichodesmium erythraeum (strain IMS101) protein is Small ribosomal subunit protein uS8.